A 469-amino-acid polypeptide reads, in one-letter code: Ribonuclease Y (469 aa).

A helical transmembrane segment spans residues 6-26; sequence VTLILVGVIIFLFISLFFYVI. The region spanning 149 to 209 is the KH domain; sequence FSFTIKLENE…IRREKAKRTM (61 aa). The HD domain maps to 276–369; it reads VLLHCVEAAV…VKVVDKLSAS (94 aa).

This sequence belongs to the RNase Y family.

The protein localises to the cell membrane. Endoribonuclease that initiates mRNA decay. The protein is Ribonuclease Y of Malacoplasma penetrans (strain HF-2) (Mycoplasma penetrans).